A 465-amino-acid polypeptide reads, in one-letter code: Ribulose bisphosphate carboxylase large chain (465 aa).

Position 4 is an N6,N6,N6-trimethyllysine (K4). Substrate contacts are provided by N113 and T163. The active-site Proton acceptor is the K165. Position 167 (K167) interacts with substrate. Mg(2+) contacts are provided by K191, D193, and E194. K191 is modified (N6-carboxylysine). H284 acts as the Proton acceptor in catalysis. The substrate site is built by R285, H317, and S369.

This sequence belongs to the RuBisCO large chain family. Type I subfamily. As to quaternary structure, heterohexadecamer of 8 large chains and 8 small chains; disulfide-linked. The disulfide link is formed within the large subunit homodimers. The cofactor is Mg(2+). Post-translationally, the disulfide bond which can form in the large chain dimeric partners within the hexadecamer appears to be associated with oxidative stress and protein turnover.

The protein localises to the plastid. The protein resides in the chloroplast. It carries out the reaction 2 (2R)-3-phosphoglycerate + 2 H(+) = D-ribulose 1,5-bisphosphate + CO2 + H2O. It catalyses the reaction D-ribulose 1,5-bisphosphate + O2 = 2-phosphoglycolate + (2R)-3-phosphoglycerate + 2 H(+). RuBisCO catalyzes two reactions: the carboxylation of D-ribulose 1,5-bisphosphate, the primary event in carbon dioxide fixation, as well as the oxidative fragmentation of the pentose substrate in the photorespiration process. Both reactions occur simultaneously and in competition at the same active site. This Ailanthus altissima (Tree-of-heaven) protein is Ribulose bisphosphate carboxylase large chain.